Here is a 381-residue protein sequence, read N- to C-terminus: N-acetylglucosamine-6-phosphate deacetylase (381 aa).

Glu129 contributes to the a divalent metal cation binding site. 140 to 141 (VH) contributes to the substrate binding site. A divalent metal cation-binding residues include His193 and His214. Substrate contacts are provided by residues 217-218 (NA), Arg226, and 246-249 (DGVH). The active-site Proton donor/acceptor is the Asp271. 306 to 308 (IAG) serves as a coordination point for substrate.

Belongs to the metallo-dependent hydrolases superfamily. NagA family. As to quaternary structure, homotetramer. A divalent metal cation serves as cofactor.

It catalyses the reaction N-acetyl-D-glucosamine 6-phosphate + H2O = D-glucosamine 6-phosphate + acetate. It functions in the pathway amino-sugar metabolism; N-acetylneuraminate degradation; D-fructose 6-phosphate from N-acetylneuraminate: step 4/5. In terms of biological role, involved in the first committed step in the biosynthesis of amino-sugar-nucleotides. Catalyzes the hydrolysis of the N-acetyl group of N-acetylglucosamine-6-phosphate (GlcNAc-6-P) to yield glucosamine 6-phosphate and acetate. This Haemophilus influenzae (strain ATCC 51907 / DSM 11121 / KW20 / Rd) protein is N-acetylglucosamine-6-phosphate deacetylase (nagA).